The chain runs to 149 residues: Large ribosomal subunit protein uL22 (149 aa).

This sequence belongs to the universal ribosomal protein uL22 family. In terms of assembly, part of the 50S ribosomal subunit.

This protein binds specifically to 23S rRNA; its binding is stimulated by other ribosomal proteins, e.g. L4, L17, and L20. It is important during the early stages of 50S assembly. It makes multiple contacts with different domains of the 23S rRNA in the assembled 50S subunit and ribosome. Functionally, the globular domain of the protein is located near the polypeptide exit tunnel on the outside of the subunit, while an extended beta-hairpin is found that lines the wall of the exit tunnel in the center of the 70S ribosome. The protein is Large ribosomal subunit protein uL22 of Petrotoga mobilis (strain DSM 10674 / SJ95).